Here is a 358-residue protein sequence, read N- to C-terminus: Isopentenyl-diphosphate delta-isomerase (358 aa).

R12 to K13 lines the substrate pocket. Residues A69–T71, S99, and N128 each bind FMN. A substrate-binding site is contributed by Q158. E159 provides a ligand contact to Mg(2+). Residues K190, T220, G267–R269, and A288–G289 contribute to the FMN site.

Belongs to the IPP isomerase type 2 family. In terms of assembly, homooctamer. Dimer of tetramers. It depends on FMN as a cofactor. The cofactor is NADPH. Mg(2+) serves as cofactor.

It is found in the cytoplasm. The catalysed reaction is isopentenyl diphosphate = dimethylallyl diphosphate. Functionally, involved in the biosynthesis of isoprenoids. Catalyzes the 1,3-allylic rearrangement of the homoallylic substrate isopentenyl (IPP) to its allylic isomer, dimethylallyl diphosphate (DMAPP). The sequence is that of Isopentenyl-diphosphate delta-isomerase from Listeria monocytogenes serovar 1/2a (strain ATCC BAA-679 / EGD-e).